The following is a 933-amino-acid chain: Phospholipase SGR2 (933 aa).

Residues 1–14 are compositionally biased toward basic and acidic residues; the sequence is MEDRETHLGTREVN. Residues 1–22 form a disordered region; that stretch reads MEDRETHLGTREVNETSPDLLK. Ser444 is a catalytic residue. 2 disordered regions span residues 475 to 517 and 553 to 598; these read PDEE…GQDN and RGGQ…ESVN. Over residues 505-517 the composition is skewed to polar residues; it reads QLNNPEKITGQDN. Over residues 553 to 563 the composition is skewed to basic and acidic residues; it reads RGGQEDDHHDS. The stretch at 593-631 forms a coiled coil; it reads DKESVNSNNEERIKLLQDEVNSLRSKVAQLLSENARILS. Residues 669–868 form the DDHD domain; the sequence is LEFKVDTFFA…ALFIIKHLYR (200 aa). Residues 871-903 form a disordered region; it reads PDGPNSPTESTEGDDSPKDSSRPHSWIDRREAD. Over residues 885-902 the composition is skewed to basic and acidic residues; sequence DSPKDSSRPHSWIDRREA.

Forms oligomers. Expressed in roots, hypocotyls, leaves, stems and floral buds, and, at low levels, in siliques.

The protein localises to the vacuole membrane. Its function is as follows. Involved in vacuolar formation or function (e.g. formation of vacuolar membrane 'bulbs'). Required for amyloplast sedimentation in the endodermis during shoot gravitropism, which are thus acting as statoliths. Particularly important for the negative gravitropism leading to leaf movement observed in darkness. The sequence is that of Phospholipase SGR2 (SGR2) from Arabidopsis thaliana (Mouse-ear cress).